The sequence spans 181 residues: Adenine phosphoribosyltransferase (181 aa).

Belongs to the purine/pyrimidine phosphoribosyltransferase family. Homodimer.

It localises to the cytoplasm. The enzyme catalyses AMP + diphosphate = 5-phospho-alpha-D-ribose 1-diphosphate + adenine. It functions in the pathway purine metabolism; AMP biosynthesis via salvage pathway; AMP from adenine: step 1/1. Functionally, catalyzes a salvage reaction resulting in the formation of AMP, that is energically less costly than de novo synthesis. The polypeptide is Adenine phosphoribosyltransferase (Vibrio atlanticus (strain LGP32) (Vibrio splendidus (strain Mel32))).